The following is a 352-amino-acid chain: MSEQQTMSELKQQALVDINEANDERALQEVKVKYLGKKGSVSGLMKLMKDLPNEEKPAFGQKVNELRQTIQNELDERQQMLVKEKLNKQLAEETVDVSLPGRHIEIGSKHPLTRTIEEIEDLFLGLGYEIVNGYEVEQDHYNFEMLNLPKSHPARDMQDSFYITDEILLRTHTSPVQARTMESRHGQGPVKIICPGKVYRRDSDDATHSHQFTQIEGLVVDKNVKMSDLKGTLELLAKKLFGADREIRLRPSYFPFTEPSVEVDVSCFKCKGKGCNVCKHTGWIEILGAGMVHPNVLEMAGFDSSEYSGFAFGMGPDRIAMLKYGIEDIRHFYTNDVRFLDQFKAVEDRGDM.

Mg(2+) is bound at residue E258.

It belongs to the class-II aminoacyl-tRNA synthetase family. Phe-tRNA synthetase alpha subunit type 1 subfamily. Tetramer of two alpha and two beta subunits. Mg(2+) is required as a cofactor.

It localises to the cytoplasm. The enzyme catalyses tRNA(Phe) + L-phenylalanine + ATP = L-phenylalanyl-tRNA(Phe) + AMP + diphosphate + H(+). In Staphylococcus aureus (strain bovine RF122 / ET3-1), this protein is Phenylalanine--tRNA ligase alpha subunit.